A 253-amino-acid chain; its full sequence is 2-dehydro-3-deoxy-D-gluconate 5-dehydrogenase (253 aa).

Position 14–38 (14–38 (VVTGCDTGLGQGMALGLAQAGCDIV)) interacts with NAD(+). Position 145 (Ser-145) interacts with substrate. Tyr-158 (proton acceptor) is an active-site residue.

The protein belongs to the short-chain dehydrogenases/reductases (SDR) family. Homotetramer.

The catalysed reaction is 2-dehydro-3-deoxy-D-gluconate + NAD(+) = 3-deoxy-D-glycero-2,5-hexodiulosonate + NADH + H(+). It catalyses the reaction 4-pregnen-20,21-diol-3-one + NAD(+) = 21-hydroxyprogesterone + NADH + H(+). In terms of biological role, catalyzes the reversible reduction of 2,5-diketo-3-deoxygluconate (DKII or 4,6-dihydroxy-2,5-dioxohexanoate) into 2-keto-3-deoxygluconate (KDG or 2-dehydro-3-deoxygluconate) with a concomitant oxidation of NADH. To a lesser extent, can also reduce 5-keto-D-gluconate and oxidize D-gluconate and 1,2-propanediol. Together with KduI, seems to play a role in the catabolism of hexuronates under osmotic stress conditions, substituting for the regular hexuronate degrading enzymes UxaABC and UxuAB whose expression is repressed in these conditions. In vitro, also exhibits NADH-dependent 20-ketosteroid reductase activity against eukaryotic steroid hormone 11-deoxycorticosterone (11-DOC), which is converted into the product 4-pregnen-20,21-diol-3-one. In addition to 11-DOC, five other C21 steroid compounds (11-deoxycortisol, cortisol, corticosterone, cortisone, and 21-hydroxypregnenolone) are reduced by KduD, but steroids lacking the hydroxyl group at C21 position, such as pregnenolone, testosterone propionate, cortisone acetate, or progesterone, cannot be used as substrate. This Escherichia coli (strain K12) protein is 2-dehydro-3-deoxy-D-gluconate 5-dehydrogenase.